Consider the following 452-residue polypeptide: Putative zinc metalloprotease VC_2253 (452 aa).

Residue H22 participates in Zn(2+) binding. E23 is a catalytic residue. Position 26 (H26) interacts with Zn(2+). The helical transmembrane segment at 98–120 threads the bilayer; it reads SAIVSAGPIFNFLFAIFAYWLVF. The region spanning 197 to 292 is the PDZ domain; the sequence is NLRDWNFDPE…QVELTLIPDS (96 aa). 2 helical membrane passes run 378–400 and 428–447; these read FVYF…LVPL and MGYR…AIFN.

This sequence belongs to the peptidase M50B family. It depends on Zn(2+) as a cofactor.

The protein resides in the cell inner membrane. This Vibrio cholerae serotype O1 (strain ATCC 39315 / El Tor Inaba N16961) protein is Putative zinc metalloprotease VC_2253.